Here is a 278-residue protein sequence, read N- to C-terminus: Probable esterase TOX9 (278 aa).

Residues serine 119, aspartate 222, and histidine 250 each act as charge relay system in the active site.

This sequence belongs to the LovG family.

The protein operates within mycotoxin biosynthesis. Probable esterase; part of the Tox1A locus, one of the 2 loci that mediate the biosynthesis of T-toxin, a family of linear polyketides 37 to 45 carbons in length, of which the major component is 41 carbons, and which leads to high virulence to maize. One of the PKSs (PKS1 or PKS2) could synthesize a precursor, used subsequently by the other PKS as starter unit, to add additional carbons. Variability in the length of the final carbon backbone C35-47 could be achieved by varying the number of condensation cycles, or use of different starter or extender units or might be due to decarboxylation of the penultimate product, catalyzed by DEC1. Additional proteins are required for the biosynthesis of T-toxin, including oxidoreductases RED1, RED2, RED3, LAM1 and OXI1, as well as esterase TOX9. The polypeptide is Probable esterase TOX9 (Cochliobolus heterostrophus (strain C4 / ATCC 48331 / race T) (Southern corn leaf blight fungus)).